The chain runs to 164 residues: Putative 4-hydroxy-4-methyl-2-oxoglutarate aldolase (164 aa).

Substrate is bound by residues 79 to 82 (GDRL) and Arg-101. An a divalent metal cation-binding site is contributed by Asp-102.

This sequence belongs to the class II aldolase/RraA-like family. In terms of assembly, homotrimer. Requires a divalent metal cation as cofactor.

It carries out the reaction 4-hydroxy-4-methyl-2-oxoglutarate = 2 pyruvate. The enzyme catalyses oxaloacetate + H(+) = pyruvate + CO2. Its function is as follows. Catalyzes the aldol cleavage of 4-hydroxy-4-methyl-2-oxoglutarate (HMG) into 2 molecules of pyruvate. Also contains a secondary oxaloacetate (OAA) decarboxylase activity due to the common pyruvate enolate transition state formed following C-C bond cleavage in the retro-aldol and decarboxylation reactions. The chain is Putative 4-hydroxy-4-methyl-2-oxoglutarate aldolase from Halorhodospira halophila (strain DSM 244 / SL1) (Ectothiorhodospira halophila (strain DSM 244 / SL1)).